The sequence spans 419 residues: Carboxypeptidase A1 (419 aa).

A signal peptide spans 1–16 (MKRLLILSLLLEAVCG). Positions 17–110 (NENFVGHQVL…KQQMSAFQAR (94 aa)) are cleaved as a propeptide — activation peptide. The Peptidase M14 domain maps to 121 to 414 (TYHTLDEIYE…LALLTIMDHT (294 aa)). His179 and Glu182 together coordinate Zn(2+). Substrate-binding positions include 179–182 (HSRE), Arg237, and 254–255 (NR). Cys248 and Cys271 form a disulfide bridge. Residue His306 participates in Zn(2+) binding. Residues 307–308 (SY) and Tyr358 each bind substrate. Catalysis depends on Glu380, which acts as the Proton donor/acceptor.

It belongs to the peptidase M14 family. Monomer. May form a complex with proelastase 2. Zn(2+) serves as cofactor.

The protein resides in the secreted. The catalysed reaction is Release of a C-terminal amino acid, but little or no action with -Asp, -Glu, -Arg, -Lys or -Pro.. The enzyme catalyses leukotriene C4 + H2O = leukotriene F4 + glycine. Functionally, carboxypeptidase that catalyzes the release of a C-terminal amino acid, but has little or no action with -Asp, -Glu, -Arg, -Lys or -Pro. Catalyzes the conversion of leukotriene C4 to leukotriene F4 via the hydrolysis of an amide bond. The chain is Carboxypeptidase A1 from Rattus norvegicus (Rat).